Here is a 480-residue protein sequence, read N- to C-terminus: MNYLNETIDSLNDKLKSGAVSADQLVKDTIANIKKTDEKINAFITVDEDAKPAEDLDFNNKLAGVPIAIKDNIITNGLKTTAASHILYNFEPVYESTVVAKLKAAQATIIGKTNMDEFAMGSSTETSYFGDTKNPWNLNKVPGGSSGGSAAAVASGEVVAALGSDTGGSIRQPASFNGIFGIKPTYGRVSRWGLIAFASSLDQIGVMSKRVKDSAEVLNVIAGADDRDATVSEKEVPDYTSFLGKDVKGLRVAVPKEYMSDAVEEGVRKEVEAQIELLRANGAIINEVSLPHTKYVVPTYYIIASSEASANLERYDGIRYGYRAEAKNLDEVFLKSRSEGFGDEVKRRIMLGSFALSAGAYDKFFLQAAKVRTLICQDFDKIFEDNDVIVGPVSTETAFDLNSEISDQIKMYNNDILTISANMAGIPAASVPAGLSETTGMPVGFQIMAKRFDEGHVFQVADFIERSNKFYEQTPAGLED.

Active-site charge relay system residues include Lys70 and Ser145. Ser169 acts as the Acyl-ester intermediate in catalysis.

It belongs to the amidase family. GatA subfamily. Heterotrimer of A, B and C subunits.

It catalyses the reaction L-glutamyl-tRNA(Gln) + L-glutamine + ATP + H2O = L-glutaminyl-tRNA(Gln) + L-glutamate + ADP + phosphate + H(+). Allows the formation of correctly charged Gln-tRNA(Gln) through the transamidation of misacylated Glu-tRNA(Gln) in organisms which lack glutaminyl-tRNA synthetase. The reaction takes place in the presence of glutamine and ATP through an activated gamma-phospho-Glu-tRNA(Gln). The chain is Glutamyl-tRNA(Gln) amidotransferase subunit A from Lactobacillus delbrueckii subsp. bulgaricus (strain ATCC 11842 / DSM 20081 / BCRC 10696 / JCM 1002 / NBRC 13953 / NCIMB 11778 / NCTC 12712 / WDCM 00102 / Lb 14).